Consider the following 1020-residue polypeptide: Mediator of RNA polymerase II transcription subunit 16 (1020 aa).

This sequence belongs to the Mediator complex subunit 16 family. In terms of assembly, component of the Mediator complex.

Its subcellular location is the nucleus. In terms of biological role, component of the Mediator complex, a coactivator involved in the regulated transcription of nearly all RNA polymerase II-dependent genes. Mediator functions as a bridge to convey information from gene-specific regulatory proteins to the basal RNA polymerase II transcription machinery. Mediator is recruited to promoters by direct interactions with regulatory proteins and serves as a scaffold for the assembly of a functional preinitiation complex with RNA polymerase II and the general transcription factors. In Scheffersomyces stipitis (strain ATCC 58785 / CBS 6054 / NBRC 10063 / NRRL Y-11545) (Yeast), this protein is Mediator of RNA polymerase II transcription subunit 16 (SIN4).